Here is a 159-residue protein sequence, read N- to C-terminus: Eukaryotic translation initiation factor 5A-2 (159 aa).

A compositionally biased stretch (basic and acidic residues) spans 1-10 (MSDDEHHFEA). The interval 1–25 (MSDDEHHFEASESGASKTYPQSAGN) is disordered. At S2 the chain carries Phosphoserine. Over residues 13–24 (SGASKTYPQSAG) the composition is skewed to polar residues. Hypusine is present on K51.

The protein belongs to the eIF-5A family. Homodimer. Interacts with AHK4 and AHP1. Cytokinin regulates the formation of the AHP1-AHK4-ELF5A-2 complex. Post-translationally, lys-51 undergoes hypusination, a unique post-translational modification that consists in the addition of a butylamino group from spermidine to lysine side chain, leading to the formation of the unusual amino acid hypusine. eIF-5As are the only known proteins to undergo this modification, which is essential for their function. As to expression, ubiquitous. In roots, expressed mostly inside the stele of the mature zone.

It localises to the cytoplasm. The protein localises to the nucleus. Functionally, translation factor that promotes translation elongation and termination, particularly upon ribosome stalling at specific amino acid sequence contexts. Binds between the exit (E) and peptidyl (P) site of the ribosome and promotes rescue of stalled ribosome: specifically required for efficient translation of polyproline-containing peptides as well as other motifs that stall the ribosome. Acts as a ribosome quality control (RQC) cofactor by joining the RQC complex to facilitate peptidyl transfer during CAT tailing step. Regulates cytokinin-mediated root protoxylem specification and represses secifically the expression of AHP6. Regulates the induction of programmed cell death caused by infection with virulent pathogen. The chain is Eukaryotic translation initiation factor 5A-2 (ELF5A-2) from Arabidopsis thaliana (Mouse-ear cress).